A 294-amino-acid chain; its full sequence is Elongation factor Ts (294 aa).

The segment at 80–83 (TDFV) is involved in Mg(2+) ion dislocation from EF-Tu.

The protein belongs to the EF-Ts family.

The protein resides in the cytoplasm. Its function is as follows. Associates with the EF-Tu.GDP complex and induces the exchange of GDP to GTP. It remains bound to the aminoacyl-tRNA.EF-Tu.GTP complex up to the GTP hydrolysis stage on the ribosome. This chain is Elongation factor Ts, found in Listeria innocua serovar 6a (strain ATCC BAA-680 / CLIP 11262).